An 82-amino-acid chain; its full sequence is Putative membrane protein insertion efficiency factor (82 aa).

This sequence belongs to the UPF0161 family.

The protein resides in the cell membrane. Could be involved in insertion of integral membrane proteins into the membrane. The sequence is that of Putative membrane protein insertion efficiency factor from Streptococcus thermophilus (strain ATCC BAA-491 / LMD-9).